A 232-amino-acid polypeptide reads, in one-letter code: Beta-casein (232 aa).

Positions 1-15 (MKVLILACRVALALA) are cleaved as a signal peptide. Phosphoserine is present on residues S30, S32, S33, and S34.

Belongs to the beta-casein family. As to expression, mammary gland specific. Secreted in milk.

Its subcellular location is the secreted. Functionally, important role in determination of the surface properties of the casein micelles. The chain is Beta-casein (CSN2) from Camelus dromedarius (Dromedary).